Consider the following 445-residue polypeptide: MDTTTMPNLLWHKPGVAIDASIQTFLAADDVLLDREFFLYDITASTAHAQALQRIGLLTPDELDNILRELQHLSDEYRNGTFLLDTQYEDGHSAIESRLTERLGDTGRKIHTGRSRNDQILVATRLWLKDRLTQLSTLNRDIAHHALQRAAAEQHLPMPGYTHLQRAVVSSAGMWWAGWAESFIDNALRAADTLALIDCNPLGTAAGYGVNLPLDRPHTTTALGFARLQVNPICAQLSRGKFELAALEALGSATLDLRRIAWDLSLFTTSEFAFITLPPEYSTGSSIMPNKRNPDVIELMRATHASVAAARTEIEQLLSLPSGYHRDLQNSKGAIVRGFNRGLAALELLPALLSRLQWRPDTLRAAIDPGMYATDAAIEAAIAGIPFRDAYQMAAKTADTAAQDRTPETSLTARRSPGAAADLCLETLRARWHTLTQPTSDPDPR.

The protein belongs to the lyase 1 family. Argininosuccinate lyase subfamily.

It is found in the cytoplasm. The catalysed reaction is 2-(N(omega)-L-arginino)succinate = fumarate + L-arginine. It functions in the pathway amino-acid biosynthesis; L-arginine biosynthesis; L-arginine from L-ornithine and carbamoyl phosphate: step 3/3. This Xylella fastidiosa (strain Temecula1 / ATCC 700964) protein is Argininosuccinate lyase.